A 74-amino-acid polypeptide reads, in one-letter code: WAP four-disulfide core domain protein 18 (74 aa).

Positions 1–24 are cleaved as a signal peptide; that stretch reads MKTATVFVLVALIFMTMTTAWALS. Residues 26–73 form the WAP domain; it reads PKEKPGACPKPPPRSFGTCDERCTGDGSCSGNMKCCSNGCGHACKPPV.

It is found in the secreted. In terms of biological role, could have proteinase inhibiting capacity. This is WAP four-disulfide core domain protein 18 (WFDC18) from Bos taurus (Bovine).